A 214-amino-acid polypeptide reads, in one-letter code: CASP-like protein 3A1 (214 aa).

At 1–49 the chain is on the cytoplasmic side; sequence MTNGQKIEVAVQLPESKVAATENNETMSGPLVVGGGVAKPFGRKADVMH. Residues 50–70 form a helical membrane-spanning segment; sequence VILRLLCTITSVTAVSFMVTA. At 71-96 the chain is on the extracellular side; it reads HQSSTVSIYGFMLPVRSKWSFSHSFE. Residues 97 to 117 traverse the membrane as a helical segment; the sequence is YLVGVSAAVAAHSLLQLLISM. Residues 118–132 are Cytoplasmic-facing; the sequence is SRLLRKSPVIPSRSH. A helical transmembrane segment spans residues 133–153; it reads AWLIFAGDQVFAYAMISAGAA. The Extracellular portion of the chain corresponds to 154-182; that stretch reads ASGVTNLNRTGIQHTALPNFCKPLNYFCN. N-linked (GlcNAc...) asparagine glycosylation is present at Asn161. Residues 183-203 form a helical membrane-spanning segment; the sequence is HVAVSIAFAFISCLLLAALAV. Topologically, residues 204 to 214 are cytoplasmic; the sequence is QEVIWLSKSKY.

It belongs to the Casparian strip membrane proteins (CASP) family. Homodimer and heterodimers.

The protein resides in the cell membrane. This Ricinus communis (Castor bean) protein is CASP-like protein 3A1.